The sequence spans 395 residues: Cation channel sperm-associated protein 3 (395 aa).

The Cytoplasmic segment spans residues 1–48 (MSQHFHHNPVRVKSGSLFATASEALQARLSKIKRKDKECQAYFRKVIK). A helical membrane pass occupies residues 49–71 (STFFQIVMITTVTTNSFLLVLGT). Residues 72-80 (NYDIQFEFF) lie on the Extracellular side of the membrane. A helical transmembrane segment spans residues 81 to 107 (RTFEVSELFFVSVYVCEFLMKVYVDPI). T108 is a topological domain (cytoplasmic). Residues 109–131 (YWKDGYNILDVIILIILTIPYLL) traverse the membrane as a helical segment. The Extracellular portion of the chain corresponds to 132-143 (RKIKGNHSAYLH). A helical transmembrane segment spans residues 144 to 160 (FADGIQSLRILKLISYS). The Cytoplasmic portion of the chain corresponds to 161 to 168 (RGIRTLII). A helical membrane pass occupies residues 169–195 (AVGETVYTVASVLTLLFLLMFVFAILG). At 196-216 (FCLFGVTDRGDLENWGNLASA) the chain is on the extracellular side. The helical; Pore-forming intramembrane region spans 217–236 (FFTLFSLATVDGWTDLQEEL). Residues 237 to 242 (DKRKFT) are Extracellular-facing. A helical transmembrane segment spans residues 243–268 (VSRAFTILFILLASFIFLNMFVGVMI). The Cytoplasmic portion of the chain corresponds to 269 to 395 (MHTEDSMKKF…ESSSSLSGLS (127 aa)).

It belongs to the cation channel sperm-associated (TC 1.A.1.19) family. In terms of assembly, component of the CatSper complex or CatSpermasome composed of the core pore-forming members CATSPER1, CATSPER2, CATSPER3 and CATSPER4 as well as auxiliary members CATSPERB, CATSPERG2, CATSPERD, CATSPERE, CATSPERZ, C2CD6/CATSPERT, SLCO6C1, TMEM249, TMEM262 and EFCAB9. HSPA1 may be an additional auxiliary complex member. The core complex members CATSPER1, CATSPER2, CATSPER3 and CATSPER4 form a heterotetrameric channel. The auxiliary CATSPERB, CATSPERG2, CATSPERD and CATSPERE subunits form a pavilion-like structure over the pore which stabilizes the complex through interactions with CATSPER4, CATSPER3, CATSPER1 and CATSPER2 respectively. SLCO6C1 interacts with CATSPERE and TMEM262/CATSPERH interacts with CATSPERB, further stabilizing the complex. C2CD6/CATSPERT interacts at least with CATSPERD and is required for targeting the CatSper complex in the flagellar membrane. In terms of tissue distribution, testis-specific.

It localises to the cell projection. The protein localises to the cilium. Its subcellular location is the flagellum membrane. The catalysed reaction is Ca(2+)(in) = Ca(2+)(out). Its activity is regulated as follows. In contrast to the human ortholog, not activated by progesterone. Activated by intracellular alkalinization. Its function is as follows. Pore-forming subunit of the CatSper complex, a sperm-specific voltage-gated calcium channel that plays a central role in sperm cell hyperactivation. Controls calcium entry to mediate the hyperactivated motility, a step needed for sperm motility which is essential late in the preparation of sperm for fertilization. In Mus musculus (Mouse), this protein is Cation channel sperm-associated protein 3 (Catsper3).